The primary structure comprises 670 residues: Beta-fructofuranosidase 1 (670 aa).

A disordered region spans residues 1-40 (MIPAVADPTTLDGGGARRPLLPETDPRGRAAAGAEQKRPP). Residues 1–44 (MIPAVADPTTLDGGGARRPLLPETDPRGRAAAGAEQKRPPATPT) are Cytoplasmic-facing. A propeptide spans 1–112 (MIPAVADPTT…APLLGSGALQ (112 aa)) (removed in mature form). Residues 45–65 (VLTAVVSAVLLLVLVAVTVLA) traverse the membrane as a helical; Signal-anchor for type II membrane protein segment. Residues 66–670 (SQHVDGQAGG…RPYPATTTSL (605 aa)) are Lumenal-facing. Substrate is bound by residues 136–139 (WMND), Gln-155, and Trp-163. Residue Asp-139 is part of the active site. Asn-165 carries N-linked (GlcNAc...) asparagine glycosylation. Residues 198-199 (WS) and 263-264 (RD) contribute to the substrate site. Asn-275 carries N-linked (GlcNAc...) asparagine glycosylation. Substrate contacts are provided by Glu-322 and Asp-362. The N-linked (GlcNAc...) asparagine glycan is linked to Asn-518. A disulfide bridge connects residues Cys-519 and Cys-567. 2 N-linked (GlcNAc...) asparagine glycosylation sites follow: Asn-595 and Asn-639.

The protein belongs to the glycosyl hydrolase 32 family. May be present in two forms, a 70 kDa monomer and a heterodimer of the 30 kDa and 38 kDa subunits. The ratio of the levels of the two forms within cells appears to be regulated developmentally.

The protein resides in the membrane. It is found in the vacuole lumen. It catalyses the reaction Hydrolysis of terminal non-reducing beta-D-fructofuranoside residues in beta-D-fructofuranosides.. It functions in the pathway glycan biosynthesis; sucrose metabolism. The protein is Beta-fructofuranosidase 1 (IVR1) of Zea mays (Maize).